The chain runs to 256 residues: tRNA (guanine-N(7)-)-methyltransferase (256 aa).

The span at 1-15 (MVATGGQAQDQSHNQ) shows a compositional bias: polar residues. The interval 1 to 22 (MVATGGQAQDQSHNQEPGVLCP) is disordered. Residues G79, 102-103 (EI), 137-138 (NA), and L157 contribute to the S-adenosyl-L-methionine site. The active site involves D160. Residue 235 to 237 (SEE) coordinates S-adenosyl-L-methionine.

The protein belongs to the class I-like SAM-binding methyltransferase superfamily. TrmB family.

It localises to the nucleus. The enzyme catalyses guanosine(46) in tRNA + S-adenosyl-L-methionine = N(7)-methylguanosine(46) in tRNA + S-adenosyl-L-homocysteine. The protein operates within tRNA modification; N(7)-methylguanine-tRNA biosynthesis. Catalyzes the formation of N(7)-methylguanine at position 46 (m7G46) in tRNA. This is tRNA (guanine-N(7)-)-methyltransferase from Drosophila yakuba (Fruit fly).